A 1342-amino-acid polypeptide reads, in one-letter code: ATP-dependent RNA helicase TDRD9 (1342 aa).

Residues Lys-31 to Gln-63 show a composition bias toward basic and acidic residues. A disordered region spans residues Lys-31–Leu-81. Residues Val-99 to Asn-265 enclose the Helicase ATP-binding domain. Gly-112–Thr-119 serves as a coordination point for ATP. The DEAH box signature appears at Asp-211–His-214. A Helicase C-terminal domain is found at Ser-317–Gly-503. The Tudor domain maps to Ser-901 to Pro-962.

It belongs to the DEAD box helicase family. DEAH subfamily.

It is found in the cytoplasm. The protein localises to the nucleus. The enzyme catalyses ATP + H2O = ADP + phosphate + H(+). In terms of biological role, ATP-binding RNA helicase which plays a central role during spermatogenesis by repressing transposable elements and preventing their mobilization, which is essential for the germline integrity. Acts via the piRNA metabolic process, which mediates the repression of transposable elements during meiosis by forming complexes composed of piRNAs and Piwi proteins and governs the methylation and subsequent repression of transposons. Acts downstream of piRNA biogenesis: exclusively required for transposon silencing in the nucleus, suggesting that it acts as a nuclear effector in the nucleus together with piwil4. This Danio rerio (Zebrafish) protein is ATP-dependent RNA helicase TDRD9.